The primary structure comprises 231 residues: LexA repressor (231 aa).

The segment at residues 28-48 (IREIGEALDIRSTNGVNDHLK) is a DNA-binding region (H-T-H motif). Catalysis depends on for autocatalytic cleavage activity residues S149 and K186.

Belongs to the peptidase S24 family. In terms of assembly, homodimer.

The enzyme catalyses Hydrolysis of Ala-|-Gly bond in repressor LexA.. Represses a number of genes involved in the response to DNA damage (SOS response), including recA and lexA. In the presence of single-stranded DNA, RecA interacts with LexA causing an autocatalytic cleavage which disrupts the DNA-binding part of LexA, leading to derepression of the SOS regulon and eventually DNA repair. The sequence is that of LexA repressor from Anaeromyxobacter sp. (strain Fw109-5).